The primary structure comprises 118 residues: Ribulose bisphosphate carboxylase small subunit 2 (118 aa).

This sequence belongs to the RuBisCO small chain family. Heterohexadecamer of 8 large and 8 small subunits.

RuBisCO catalyzes two reactions: the carboxylation of D-ribulose 1,5-bisphosphate, the primary event in carbon dioxide fixation, as well as the oxidative fragmentation of the pentose substrate. Both reactions occur simultaneously and in competition at the same active site. Although the small subunit is not catalytic it is essential for maximal activity. In Acidithiobacillus ferrooxidans (Thiobacillus ferrooxidans), this protein is Ribulose bisphosphate carboxylase small subunit 2.